A 135-amino-acid polypeptide reads, in one-letter code: NADH-quinone oxidoreductase subunit A (135 aa).

Helical transmembrane passes span 9-29, 67-87, and 97-117; these read YFPILLQAVIAMGLAAGLLTV, VGMLFILFDIEAIFLYPWVVV, and LFGFYEMLTFVILILSGFFYI.

This sequence belongs to the complex I subunit 3 family. NDH-1 is composed of 14 different subunits. Subunits NuoA, H, J, K, L, M, N constitute the membrane sector of the complex.

The protein resides in the cell inner membrane. The catalysed reaction is a quinone + NADH + 5 H(+)(in) = a quinol + NAD(+) + 4 H(+)(out). Its function is as follows. NDH-1 shuttles electrons from NADH, via FMN and iron-sulfur (Fe-S) centers, to quinones in the respiratory chain. The immediate electron acceptor for the enzyme in this species is believed to be ubiquinone. Couples the redox reaction to proton translocation (for every two electrons transferred, four hydrogen ions are translocated across the cytoplasmic membrane), and thus conserves the redox energy in a proton gradient. This chain is NADH-quinone oxidoreductase subunit A, found in Solibacter usitatus (strain Ellin6076).